The following is a 419-amino-acid chain: Gamma-glutamyl phosphate reductase (419 aa).

It belongs to the gamma-glutamyl phosphate reductase family.

Its subcellular location is the cytoplasm. The catalysed reaction is L-glutamate 5-semialdehyde + phosphate + NADP(+) = L-glutamyl 5-phosphate + NADPH + H(+). It functions in the pathway amino-acid biosynthesis; L-proline biosynthesis; L-glutamate 5-semialdehyde from L-glutamate: step 2/2. Functionally, catalyzes the NADPH-dependent reduction of L-glutamate 5-phosphate into L-glutamate 5-semialdehyde and phosphate. The product spontaneously undergoes cyclization to form 1-pyrroline-5-carboxylate. This chain is Gamma-glutamyl phosphate reductase, found in Gloeobacter violaceus (strain ATCC 29082 / PCC 7421).